The sequence spans 339 residues: Anthranilate phosphoribosyltransferase (339 aa).

5-phospho-alpha-D-ribose 1-diphosphate-binding positions include Gly-81, Gly-84–Asp-85, Asn-91–Thr-94, Lys-109–Ser-117, and Ser-121. Gly-81 lines the anthranilate pocket. Ser-93 is a Mg(2+) binding site. Position 112 (Asn-112) interacts with anthranilate. Arg-167 contacts anthranilate. Asp-226 and Glu-227 together coordinate Mg(2+).

Belongs to the anthranilate phosphoribosyltransferase family. Homodimer. The cofactor is Mg(2+).

It carries out the reaction N-(5-phospho-beta-D-ribosyl)anthranilate + diphosphate = 5-phospho-alpha-D-ribose 1-diphosphate + anthranilate. It functions in the pathway amino-acid biosynthesis; L-tryptophan biosynthesis; L-tryptophan from chorismate: step 2/5. Functionally, catalyzes the transfer of the phosphoribosyl group of 5-phosphorylribose-1-pyrophosphate (PRPP) to anthranilate to yield N-(5'-phosphoribosyl)-anthranilate (PRA). The sequence is that of Anthranilate phosphoribosyltransferase from Maricaulis maris (strain MCS10) (Caulobacter maris).